We begin with the raw amino-acid sequence, 180 residues long: uncharacterized protein (180 aa).

A signal peptide spans 1–22 (MKRSIIAAAVFSSFFMSAGVFA).

This sequence belongs to the fimbrial protein family.

Part of the yehABCD fimbrial operon. Could contribute to adhesion to various surfaces in specific environmental niches. This is an uncharacterized protein from Escherichia coli (strain K12).